The sequence spans 611 residues: tRNA uridine 5-carboxymethylaminomethyl modification enzyme MnmG (611 aa).

Residues 8-13, Val120, and Ser175 each bind FAD; that span reads GAGHAG. 268–282 contributes to the NAD(+) binding site; sequence GPRYCPSIEDKIVRF. An FAD-binding site is contributed by Gln365.

Belongs to the MnmG family. Homodimer. Heterotetramer of two MnmE and two MnmG subunits. FAD is required as a cofactor.

It localises to the cytoplasm. Its function is as follows. NAD-binding protein involved in the addition of a carboxymethylaminomethyl (cmnm) group at the wobble position (U34) of certain tRNAs, forming tRNA-cmnm(5)s(2)U34. The sequence is that of tRNA uridine 5-carboxymethylaminomethyl modification enzyme MnmG from Mycoplasmoides gallisepticum (strain R(low / passage 15 / clone 2)) (Mycoplasma gallisepticum).